The chain runs to 902 residues: 4-hydroxyphenylacetate decarboxylase glycyl radical subunit (902 aa).

Residues 38-774 (KRAEDLLDVY…ATLATPDGRL (737 aa)) enclose the PFL domain. 4-hydroxyphenylacetate-binding residues include S348 and C507. Catalysis depends on C507, which acts as the Cysteine radical intermediate. The active-site Proton donor is the E509. 2 residues coordinate 4-hydroxyphenylacetate: H540 and E641. A Glycine radical domain is found at 782–902 (GSVSAYAGTD…VIARTEYEGV (121 aa)). G877 carries the post-translational modification Glycine radical.

The protein belongs to the glycyl radical enzyme (GRE) family. HPAD subfamily. Heterooctamer consisting of 4 large (HpdB) subunits and 4 small (HpdC) subunits. Also forms a catalytically inactive homodimer. In terms of processing, phosphorylated on serine. Phosphorylation may trigger the formation of the active heterooctamers and thereby regulates enzyme activity. Requires the activating protein HpdA to generate the key active site glycyl radical that is involved in catalysis.

The catalysed reaction is 4-hydroxyphenylacetate + H(+) = 4-methylphenol + CO2. The enzyme catalyses 3,4-dihydroxyphenylacetate + H(+) = 4-methylcatechol + CO2. It catalyses the reaction 2-hydroxy-2-(4-hydroxyphenyl)acetate + H(+) = 4-hydroxybenzyl alcohol + CO2. With respect to regulation, enzyme activity catalyzed by the HPA decarboxylase complex is rapidly and irreversibly inactivated by oxygen. Competitively inhibited by p-hydroxyphenylacetamide. Not inhibited by m- or o-hydroxyphenyl-acetate, p-hydroxybenzoate or p-hydroxyphenylpropionate. Glycyl radical subunit of the HPA decarboxylase that decarboxylates phenylacetates with a hydroxyl group in the p-position. Active toward 4-hydroxyphenylacetate, 3,4-dihydroxyphenylacetate and to a lesser extent p-hydroxymandelate (2-hydroxy-2-(4-hydroxyphenyl)acetate), forming 4-methylphenol, 4-methylcatechol and 4-hydroxybenzylalcohol, respectively. Is likely involved in the catabolism of aromatic amino acids such as tyrosine fermentation. 4-methylphenol (p-cresol) formation provides metabolic toxicity, which may benefit the pathogen C.difficile by suppression of the endogenous gastrointestinal microflora, allowing the development of gastrointestinal infections. The large subunit is the catalytic subunit that binds the substrate. The sequence is that of 4-hydroxyphenylacetate decarboxylase glycyl radical subunit from Clostridioides difficile (Peptoclostridium difficile).